The chain runs to 129 residues: Small ribosomal subunit protein uS11 (129 aa).

Belongs to the universal ribosomal protein uS11 family. As to quaternary structure, part of the 30S ribosomal subunit. Interacts with proteins S7 and S18. Binds to IF-3.

Located on the platform of the 30S subunit, it bridges several disparate RNA helices of the 16S rRNA. Forms part of the Shine-Dalgarno cleft in the 70S ribosome. This is Small ribosomal subunit protein uS11 from Pasteurella multocida (strain Pm70).